Reading from the N-terminus, the 467-residue chain is Ribulose bisphosphate carboxylase large chain (467 aa).

Lys6 is subject to N6,N6,N6-trimethyllysine. Asn115 and Thr165 together coordinate substrate. Lys167 (proton acceptor) is an active-site residue. Lys169 provides a ligand contact to substrate. Mg(2+) contacts are provided by Lys193, Asp195, and Glu196. Lys193 bears the N6-carboxylysine mark. The Proton acceptor role is filled by His286. Residues Arg287, His319, and Ser371 each contribute to the substrate site.

The protein belongs to the RuBisCO large chain family. Type I subfamily. Heterohexadecamer of 8 large chains and 8 small chains; disulfide-linked. The disulfide link is formed within the large subunit homodimers. Mg(2+) is required as a cofactor. Post-translationally, the disulfide bond which can form in the large chain dimeric partners within the hexadecamer appears to be associated with oxidative stress and protein turnover.

It localises to the plastid. The protein localises to the chloroplast. It carries out the reaction 2 (2R)-3-phosphoglycerate + 2 H(+) = D-ribulose 1,5-bisphosphate + CO2 + H2O. The enzyme catalyses D-ribulose 1,5-bisphosphate + O2 = 2-phosphoglycolate + (2R)-3-phosphoglycerate + 2 H(+). In terms of biological role, ruBisCO catalyzes two reactions: the carboxylation of D-ribulose 1,5-bisphosphate, the primary event in carbon dioxide fixation, as well as the oxidative fragmentation of the pentose substrate in the photorespiration process. Both reactions occur simultaneously and in competition at the same active site. The chain is Ribulose bisphosphate carboxylase large chain from Cedrus atlantica (Atlas cedar).